We begin with the raw amino-acid sequence, 308 residues long: tRNA pseudouridine synthase B (308 aa).

The Nucleophile role is filled by aspartate 48.

It belongs to the pseudouridine synthase TruB family. Type 1 subfamily.

It carries out the reaction uridine(55) in tRNA = pseudouridine(55) in tRNA. In terms of biological role, responsible for synthesis of pseudouridine from uracil-55 in the psi GC loop of transfer RNAs. This is tRNA pseudouridine synthase B from Histophilus somni (strain 129Pt) (Haemophilus somnus).